The following is a 316-amino-acid chain: Pantothenate kinase (316 aa).

Position 95 to 102 (95 to 102 (GSVAVGKS)) interacts with ATP.

It belongs to the prokaryotic pantothenate kinase family.

The protein resides in the cytoplasm. The catalysed reaction is (R)-pantothenate + ATP = (R)-4'-phosphopantothenate + ADP + H(+). It participates in cofactor biosynthesis; coenzyme A biosynthesis; CoA from (R)-pantothenate: step 1/5. This Yersinia enterocolitica serotype O:8 / biotype 1B (strain NCTC 13174 / 8081) protein is Pantothenate kinase.